A 93-amino-acid chain; its full sequence is Small ribosomal subunit protein uS19 (93 aa).

Belongs to the universal ribosomal protein uS19 family.

In terms of biological role, protein S19 forms a complex with S13 that binds strongly to the 16S ribosomal RNA. The sequence is that of Small ribosomal subunit protein uS19 from Streptococcus gordonii (strain Challis / ATCC 35105 / BCRC 15272 / CH1 / DL1 / V288).